Here is an 890-residue protein sequence, read N- to C-terminus: Wolframin (890 aa).

Met1 is subject to N-acetylmethionine. The segment covering 1-20 (MNSGTPPPSPSGPPPPPAPQ) has biased composition (pro residues). The tract at residues 1 to 83 (MNSGTPPPSP…ETDRAGPMKA (83 aa)) is disordered. The interaction with ATP6V1A stretch occupies residues 1-323 (MNSGTPPPSP…MHWLSTIVPT (323 aa)). Residue Thr30 is modified to Phosphothreonine. A Phosphoserine modification is found at Ser32. Positions 50 to 67 (PSAGRSAGEAAAPEPRAP) are enriched in low complexity. Residues 71 to 83 (SREETDRAGPMKA) show a composition bias toward basic and acidic residues. Ser158 is subject to Phosphoserine. The tract at residues 208-227 (VNEQDGGAQPGPVPKSLQKQ) is disordered. 10 helical membrane passes run 314 to 334 (MHWL…FFFI), 340 to 360 (IDFF…VSMV), 402 to 422 (NHLE…FSFP), 427 to 447 (DCIP…TSYM), 465 to 485 (VAAG…FLKV), 496 to 516 (GHFI…LFYL), 529 to 549 (TYCY…SVVI), 563 to 583 (IGYF…ALMG), 589 to 609 (RWFL…CGVP), and 632 to 652 (SSMV…CWFY). The Lumenal segment spans residues 653 to 869 (VYRSEGMKVY…HVKIEQDWRS (217 aa)). N-linked (GlcNAc...) asparagine glycosylation is found at Asn663 and Asn748. Residues 870-890 (TVHGALKFAFDFFFFPFLSAA) traverse the membrane as a helical segment.

As to quaternary structure, interacts with ATP6V1A. In terms of tissue distribution, highly expressed in the developing lens.

The protein resides in the endoplasmic reticulum membrane. It localises to the cytoplasmic vesicle. Its subcellular location is the secretory vesicle. Functionally, participates in the regulation of cellular Ca(2+) homeostasis, at least partly, by modulating the filling state of the endoplasmic reticulum Ca(2+) store. Negatively regulates the ER stress response and positively regulates the stability of V-ATPase subunits ATP6V1A and ATP1B1 by preventing their degradation through an unknown proteasome-independent mechanism. The sequence is that of Wolframin (Wfs1) from Mus musculus (Mouse).